The primary structure comprises 427 residues: MIDPKLLRGDLTDLQQQLATRGYTLDMAFWQSIENERKSLQVQTEELQSRRNAGAKQVGALKKSGEDTSELLADMQSVSGEIKTAEDELRTLQERINQAALQIPNIPAADVPVGASEDDNVEVRKWGTPREFDFEIKDHAHIGETLGMLDFEAAAKLTGSRFNVLKGQLAQMHRALIQFMLNTHTIKYGYTETYVPYIVNSESLKGTGQLPKFEGDLFKLINHTNNDDMDFYLIPTAEVPMTNLVRGERLDIKELPLKFTAHTPCFRSEAGSHGRDTRGLIRQHQFEKVEMVNIATAEQSDELLEAMTGQAEFILQQLNLPYRTVKLCTGDMGFAAQKTYDIEVWLPSQDTYREISSCSNCGDFQARRMGTRVKDGKQTSLVHTLNGSGLAVGRTLLAVMENYQNADGSITIPEVLRPFMGGADSIL.

236-238 contacts L-serine; that stretch reads TAE. An ATP-binding site is contributed by 267–269; that stretch reads RSE. Glu-290 contributes to the L-serine binding site. 354 to 357 provides a ligand contact to ATP; that stretch reads EISS. Ser-388 is a binding site for L-serine.

Belongs to the class-II aminoacyl-tRNA synthetase family. Type-1 seryl-tRNA synthetase subfamily. As to quaternary structure, homodimer. The tRNA molecule binds across the dimer.

Its subcellular location is the cytoplasm. It carries out the reaction tRNA(Ser) + L-serine + ATP = L-seryl-tRNA(Ser) + AMP + diphosphate + H(+). The catalysed reaction is tRNA(Sec) + L-serine + ATP = L-seryl-tRNA(Sec) + AMP + diphosphate + H(+). It participates in aminoacyl-tRNA biosynthesis; selenocysteinyl-tRNA(Sec) biosynthesis; L-seryl-tRNA(Sec) from L-serine and tRNA(Sec): step 1/1. Its function is as follows. Catalyzes the attachment of serine to tRNA(Ser). Is also able to aminoacylate tRNA(Sec) with serine, to form the misacylated tRNA L-seryl-tRNA(Sec), which will be further converted into selenocysteinyl-tRNA(Sec). This Psychrobacter arcticus (strain DSM 17307 / VKM B-2377 / 273-4) protein is Serine--tRNA ligase.